Reading from the N-terminus, the 212-residue chain is 3-oxo-tetronate 4-phosphate decarboxylase (212 aa).

Residue Glu79 is the Proton acceptor of the active site. Positions 79, 98, and 100 each coordinate Zn(2+). Tyr125 acts as the Proton donor in catalysis. His165 contributes to the Zn(2+) binding site.

This sequence belongs to the aldolase class II family. AraD/FucA subfamily. The cofactor is Zn(2+).

It catalyses the reaction 3-dehydro-4-O-phospho-D-erythronate + H(+) = dihydroxyacetone phosphate + CO2. The catalysed reaction is 3-dehydro-4-O-phospho-L-erythronate + H(+) = dihydroxyacetone phosphate + CO2. Functionally, catalyzes the decarboxylation of 3-oxo-tetronate 4-phosphate to dihydroxyacetone phosphate (DHAP) and CO(2). The polypeptide is 3-oxo-tetronate 4-phosphate decarboxylase (Escherichia coli O6:H1 (strain CFT073 / ATCC 700928 / UPEC)).